A 393-amino-acid chain; its full sequence is Selenide, water dikinase (393 aa).

Residues M1–D21 are disordered. C42 is an active-site residue. Residues K45, G68–D70, D93, D116, and G167–T170 contribute to the ATP site. D70 lines the Mg(2+) pocket. D116 lines the Mg(2+) pocket. D273 provides a ligand contact to Mg(2+).

Belongs to the selenophosphate synthase 1 family. Class I subfamily. In terms of assembly, homodimer. It depends on Mg(2+) as a cofactor.

It catalyses the reaction hydrogenselenide + ATP + H2O = selenophosphate + AMP + phosphate + 2 H(+). In terms of biological role, synthesizes selenophosphate from selenide and ATP. The sequence is that of Selenide, water dikinase from Trypanosoma brucei brucei (strain 927/4 GUTat10.1).